A 330-amino-acid polypeptide reads, in one-letter code: Methionyl-tRNA formyltransferase (330 aa).

116 to 119 (SLLP) serves as a coordination point for (6S)-5,6,7,8-tetrahydrofolate.

Belongs to the Fmt family.

It catalyses the reaction L-methionyl-tRNA(fMet) + (6R)-10-formyltetrahydrofolate = N-formyl-L-methionyl-tRNA(fMet) + (6S)-5,6,7,8-tetrahydrofolate + H(+). Functionally, attaches a formyl group to the free amino group of methionyl-tRNA(fMet). The formyl group appears to play a dual role in the initiator identity of N-formylmethionyl-tRNA by promoting its recognition by IF2 and preventing the misappropriation of this tRNA by the elongation apparatus. This chain is Methionyl-tRNA formyltransferase, found in Nitratidesulfovibrio vulgaris (strain DP4) (Desulfovibrio vulgaris).